A 235-amino-acid polypeptide reads, in one-letter code: Sugar fermentation stimulation protein homolog (235 aa).

This sequence belongs to the SfsA family.

This is Sugar fermentation stimulation protein homolog from Aliivibrio fischeri (strain ATCC 700601 / ES114) (Vibrio fischeri).